The chain runs to 126 residues: Heterotrimeric G protein gamma subunit GPG1 (126 aa).

In terms of assembly, g proteins are composed of 3 units, alpha, beta and gamma. GPG1 interacts with the beta subunits GBP1 and GPB2.

The protein localises to the cytoplasm. In terms of biological role, gamma subunit of a guanine nucleotide-binding protein (G protein). G proteins are involved as modulators or transducers in various transmembrane signaling systems. The beta and gamma chains are required for the GTPase activity, for replacement of GDP by GTP, and for G protein-effector interaction. Involved in the determination of the cAMP level according to nutritional conditions, most probably as a regulator of cAMP phosphodiesterase. Required for the control of pseudohyphal and haploid invasive growth. In Saccharomyces cerevisiae (strain ATCC 204508 / S288c) (Baker's yeast), this protein is Heterotrimeric G protein gamma subunit GPG1 (GPG1).